The chain runs to 333 residues: CRISPR-associated endonuclease Cas1 (333 aa).

Mn(2+) is bound by residues glutamate 162, histidine 226, and glutamate 241.

It belongs to the CRISPR-associated endonuclease Cas1 family. As to quaternary structure, homodimer, forms a heterotetramer with a Cas2 homodimer. It depends on Mg(2+) as a cofactor. Mn(2+) serves as cofactor.

Its function is as follows. CRISPR (clustered regularly interspaced short palindromic repeat), is an adaptive immune system that provides protection against mobile genetic elements (viruses, transposable elements and conjugative plasmids). CRISPR clusters contain spacers, sequences complementary to antecedent mobile elements, and target invading nucleic acids. CRISPR clusters are transcribed and processed into CRISPR RNA (crRNA). Acts as a dsDNA endonuclease. Involved in the integration of spacer DNA into the CRISPR cassette. This Nanoarchaeum equitans (strain Kin4-M) protein is CRISPR-associated endonuclease Cas1.